Here is a 317-residue protein sequence, read N- to C-terminus: Ventral anterior homeobox 1 (317 aa).

Positions 1 to 62 are disordered; that stretch reads MEVRYSQDSE…CEKSRASSGD (62 aa). The span at 18–27 shows a compositional bias: basic and acidic residues; the sequence is GLKEGKEGKD. Positions 92-151 form a DNA-binding region, homeobox; that stretch reads PKRTRTSFTAEQLYRLEMEFQRCQYVVGRERTELARQLNLSETQVKVWFQNRRTKQKKDQ. Residues 203–248 form a disordered region; it reads GPSLGITANGGSSSSSRSSAGSSGTAGGSPPLPTVTSSGTVTGLQG. The span at 212–225 shows a compositional bias: low complexity; it reads GGSSSSSRSSAGSS. Residues 236–247 show a composition bias toward polar residues; the sequence is TVTSSGTVTGLQ.

It belongs to the EMX homeobox family. In terms of tissue distribution, expressed in the anterior neural keel and later in the preoptic area and optic stalk.

The protein localises to the nucleus. Functionally, transcription factor that is required for closure of the choroid fissure and together with Vax2 is required for optic nerve differentiation and to limit retinal development to the optic cup. The sequence is that of Ventral anterior homeobox 1 (vax1) from Danio rerio (Zebrafish).